A 222-amino-acid polypeptide reads, in one-letter code: Probable transaldolase 2 (222 aa).

The Schiff-base intermediate with substrate role is filled by lysine 90.

Belongs to the transaldolase family. Type 3B subfamily.

The protein localises to the cytoplasm. It catalyses the reaction D-sedoheptulose 7-phosphate + D-glyceraldehyde 3-phosphate = D-erythrose 4-phosphate + beta-D-fructose 6-phosphate. It functions in the pathway carbohydrate degradation; pentose phosphate pathway; D-glyceraldehyde 3-phosphate and beta-D-fructose 6-phosphate from D-ribose 5-phosphate and D-xylulose 5-phosphate (non-oxidative stage): step 2/3. Functionally, transaldolase is important for the balance of metabolites in the pentose-phosphate pathway. This chain is Probable transaldolase 2, found in Bacillus anthracis.